Here is a 405-residue protein sequence, read N- to C-terminus: GTPase Obg (405 aa).

Residues 1 to 159 (MKFVDEVSIF…RDLKLELKVL (159 aa)) enclose the Obg domain. The tract at residues 127–148 (NTRFKSSTNRAPRQTTPGKPGD) is disordered. Residues 129 to 143 (RFKSSTNRAPRQTTP) are compositionally biased toward polar residues. The 174-residue stretch at 160–333 (ADVGLLGLPN…LSQAIMRYLD (174 aa)) folds into the OBG-type G domain. GTP contacts are provided by residues 166-173 (GLPNAGKS), 191-195 (FTTLV), 213-216 (DIPG), 283-286 (NKAD), and 314-316 (SAL). Positions 173 and 193 each coordinate Mg(2+). The disordered stretch occupies residues 373-405 (LRRAGVKSVEEADDDDFDDDDDDEGGAEIIYVR). Over residues 383–398 (EADDDDFDDDDDDEGG) the composition is skewed to acidic residues.

The protein belongs to the TRAFAC class OBG-HflX-like GTPase superfamily. OBG GTPase family. In terms of assembly, monomer. Mg(2+) is required as a cofactor.

It localises to the cytoplasm. Its function is as follows. An essential GTPase which binds GTP, GDP and possibly (p)ppGpp with moderate affinity, with high nucleotide exchange rates and a fairly low GTP hydrolysis rate. Plays a role in control of the cell cycle, stress response, ribosome biogenesis and in those bacteria that undergo differentiation, in morphogenesis control. This chain is GTPase Obg, found in Stutzerimonas stutzeri (strain A1501) (Pseudomonas stutzeri).